Consider the following 161-residue polypeptide: Ribosome maturation factor RimP (161 aa).

The protein belongs to the RimP family.

Its subcellular location is the cytoplasm. In terms of biological role, required for maturation of 30S ribosomal subunits. This is Ribosome maturation factor RimP from Pelobacter propionicus (strain DSM 2379 / NBRC 103807 / OttBd1).